A 139-amino-acid chain; its full sequence is ATP synthase epsilon chain (139 aa).

It belongs to the ATPase epsilon chain family. In terms of assembly, F-type ATPases have 2 components, CF(1) - the catalytic core - and CF(0) - the membrane proton channel. CF(1) has five subunits: alpha(3), beta(3), gamma(1), delta(1), epsilon(1). CF(0) has three main subunits: a, b and c.

The protein localises to the cell membrane. In terms of biological role, produces ATP from ADP in the presence of a proton gradient across the membrane. The polypeptide is ATP synthase epsilon chain (Enterococcus faecalis (strain ATCC 700802 / V583)).